Here is a 497-residue protein sequence, read N- to C-terminus: Acetyl-coenzyme A carboxylase carboxyl transferase subunit beta, chloroplastic (497 aa).

The 273-residue stretch at 225–497 (LWVQCENCYG…LHGFLPLNQD (273 aa)) folds into the CoA carboxyltransferase N-terminal domain. Zn(2+)-binding residues include cysteine 229, cysteine 232, cysteine 248, and cysteine 251. A C4-type zinc finger spans residues 229–251 (CENCYGLNYKKFFSSKMNICEYC).

It belongs to the AccD/PCCB family. Acetyl-CoA carboxylase is a heterohexamer composed of biotin carboxyl carrier protein, biotin carboxylase and 2 subunits each of ACCase subunit alpha and ACCase plastid-coded subunit beta (accD). It depends on Zn(2+) as a cofactor.

The protein localises to the plastid. It localises to the chloroplast stroma. The catalysed reaction is N(6)-carboxybiotinyl-L-lysyl-[protein] + acetyl-CoA = N(6)-biotinyl-L-lysyl-[protein] + malonyl-CoA. It functions in the pathway lipid metabolism; malonyl-CoA biosynthesis; malonyl-CoA from acetyl-CoA: step 1/1. Its function is as follows. Component of the acetyl coenzyme A carboxylase (ACC) complex. Biotin carboxylase (BC) catalyzes the carboxylation of biotin on its carrier protein (BCCP) and then the CO(2) group is transferred by the transcarboxylase to acetyl-CoA to form malonyl-CoA. This chain is Acetyl-coenzyme A carboxylase carboxyl transferase subunit beta, chloroplastic, found in Phalaenopsis aphrodite subsp. formosana (Moth orchid).